We begin with the raw amino-acid sequence, 518 residues long: Glutamate--cysteine ligase (518 aa).

Belongs to the glutamate--cysteine ligase type 1 family. Type 1 subfamily.

It catalyses the reaction L-cysteine + L-glutamate + ATP = gamma-L-glutamyl-L-cysteine + ADP + phosphate + H(+). The protein operates within sulfur metabolism; glutathione biosynthesis; glutathione from L-cysteine and L-glutamate: step 1/2. The sequence is that of Glutamate--cysteine ligase from Shigella flexneri serotype 5b (strain 8401).